We begin with the raw amino-acid sequence, 192 residues long: Nucleoside triphosphate pyrophosphatase (192 aa).

D73 functions as the Proton acceptor in the catalytic mechanism.

Belongs to the Maf family. It depends on a divalent metal cation as a cofactor.

It is found in the cytoplasm. It catalyses the reaction a ribonucleoside 5'-triphosphate + H2O = a ribonucleoside 5'-phosphate + diphosphate + H(+). The catalysed reaction is a 2'-deoxyribonucleoside 5'-triphosphate + H2O = a 2'-deoxyribonucleoside 5'-phosphate + diphosphate + H(+). Nucleoside triphosphate pyrophosphatase. May have a dual role in cell division arrest and in preventing the incorporation of modified nucleotides into cellular nucleic acids. The polypeptide is Nucleoside triphosphate pyrophosphatase (Ehrlichia ruminantium (strain Gardel)).